The sequence spans 87 residues: Acyl carrier protein TtuC (87 aa).

Residues 11–87 (ITAEDVQQWL…HALSQFIAAK (77 aa)) form the Carrier domain. At S48 the chain carries O-(pantetheine 4'-phosphoryl)serine.

The cofactor is pantetheine 4'-phosphate.

Its function is as follows. Carrier protein likely involved in the biosynthesis of a polyyne metabolite. Accepts as substrate the activated form of decanoic acid from TtuA. The chain is Acyl carrier protein TtuC from Teredinibacter turnerae (strain ATCC 39867 / T7901).